The sequence spans 182 residues: Isopentenyl-diphosphate Delta-isomerase (182 aa).

Residues His25 and His32 each coordinate Mn(2+). The Nudix hydrolase domain maps to 30 to 164 (LLHLAFSSWL…PWAFSPWMVM (135 aa)). Residue Cys67 is part of the active site. His69 lines the Mn(2+) pocket. Glu87 contacts Mg(2+). Mn(2+) contacts are provided by Glu114 and Glu116. The active site involves Glu116.

The protein belongs to the IPP isomerase type 1 family. Homodimer. Mg(2+) is required as a cofactor. The cofactor is Mn(2+).

It localises to the cytoplasm. The catalysed reaction is isopentenyl diphosphate = dimethylallyl diphosphate. Its pathway is isoprenoid biosynthesis; dimethylallyl diphosphate biosynthesis; dimethylallyl diphosphate from isopentenyl diphosphate: step 1/1. In terms of biological role, catalyzes the 1,3-allylic rearrangement of the homoallylic substrate isopentenyl (IPP) to its highly electrophilic allylic isomer, dimethylallyl diphosphate (DMAPP). The protein is Isopentenyl-diphosphate Delta-isomerase of Escherichia coli O45:K1 (strain S88 / ExPEC).